The chain runs to 569 residues: Cryptochrome DASH, chloroplastic/mitochondrial (569 aa).

Residues 84–221 form the Photolyase/cryptochrome alpha/beta domain; the sequence is GVTILWFRND…KLELIWGSTM (138 aa). Residues Tyr316 and 329–333 contribute to the FAD site; that span reads STKFS. Residue Arg436 participates in ATP binding. FAD is bound by residues Asp466 and Asp468. Asp485 is a binding site for ATP. Positions 541–569 are disordered; sequence GNGPMAGGSKSGGGFRGSHSGRRSRHNGP. The span at 544–556 shows a compositional bias: gly residues; it reads PMAGGSKSGGGFR. Positions 559–569 are enriched in basic residues; it reads HSGRRSRHNGP.

Belongs to the DNA photolyase class-1 family. In terms of assembly, homodimer. The cofactor is FAD. (6R)-5,10-methylene-5,6,7,8-tetrahydrofolate is required as a cofactor.

It is found in the plastid. It localises to the chloroplast. Its subcellular location is the mitochondrion. Functionally, may have a photoreceptor function. Binds ss- and ds-DNA in a sequence non-specific manner. Has a photolyase activity specific for cyclobutane pyrimidine dimers in ssDNA. The protein is Cryptochrome DASH, chloroplastic/mitochondrial (CRYD) of Arabidopsis thaliana (Mouse-ear cress).